Reading from the N-terminus, the 313-residue chain is Homoserine O-succinyltransferase (313 aa).

The active-site Acyl-thioester intermediate is C142. K163 and S192 together coordinate substrate. H235 serves as the catalytic Proton acceptor. E237 is an active-site residue. Substrate is bound at residue R249.

This sequence belongs to the MetA family.

Its subcellular location is the cytoplasm. The enzyme catalyses L-homoserine + succinyl-CoA = O-succinyl-L-homoserine + CoA. Its pathway is amino-acid biosynthesis; L-methionine biosynthesis via de novo pathway; O-succinyl-L-homoserine from L-homoserine: step 1/1. Its function is as follows. Transfers a succinyl group from succinyl-CoA to L-homoserine, forming succinyl-L-homoserine. The chain is Homoserine O-succinyltransferase from Shewanella sp. (strain ANA-3).